A 23-amino-acid polypeptide reads, in one-letter code: Potassium channel toxin alpha-KTx 13.4 (23 aa).

3 disulfide bridges follow: cysteine 2–cysteine 15, cysteine 5–cysteine 20, and cysteine 9–cysteine 22. Residues 13-20 (GKCINGKC) are interaction with Ca(2+)-activated K(+) channels. The residue at position 23 (tyrosine 23) is a Tyrosine amide.

In terms of tissue distribution, expressed by the venom gland.

Its subcellular location is the secreted. In terms of biological role, blocks the potassium channel Shaker B. This chain is Potassium channel toxin alpha-KTx 13.4, found in Tityus stigmurus (Brazilian scorpion).